The sequence spans 485 residues: MSPQTETKASVGFKAGVKDYKLTYYTPEYETKDTDILAAFRVTPQPGVPPEEAGAAVAAESSTGTWTTVWTDGLTSLDRYKGRCYGIEPVPGEDNQYIAYVAYPLDLFEEGSVTNMFTSIVGNVFGFKALRALRLEDLRIPTAYVKTFDGPPHGIQVERDKLNKYGRPLLGCTIKPKLGLSAKNYGRACYECLRGGLDFTKDDENVNSQPFMRWRDRFLFCAEALYKAQAETGEIKGHYLNATAGTCEDMMKRAVFARELGVPIVMHDYLTGGFTANTSLAHYCRDNGLLLHIHRAMHAVIDRQKNHGMHFRVLAKALRMSGGDHIHSGTVVGKLEGEREITLGFVDLLRDDFIEKDRSRGIYFTQDWVSLPGVLPVASGGIHVWHMPALTEIFGDDSVLQFGGGTLGHPWGNAPGAVANRVALEACVQARNEGRDLATEGNEIIREATKWSPELAAACEVWKEIKFEFQAMDTLDTDKDKDKKR.

The propeptide occupies 1-2 (MS). The residue at position 3 (Pro3) is an N-acetylproline. N6,N6,N6-trimethyllysine is present on Lys14. Residues Asn123 and Thr173 each contribute to the substrate site. Lys175 serves as the catalytic Proton acceptor. Lys177 serves as a coordination point for substrate. Mg(2+) contacts are provided by Lys201, Asp203, and Glu204. An N6-carboxylysine modification is found at Lys201. Catalysis depends on His294, which acts as the Proton acceptor. Residues Arg295, His327, and Ser379 each coordinate substrate.

This sequence belongs to the RuBisCO large chain family. Type I subfamily. As to quaternary structure, heterohexadecamer of 8 large chains and 8 small chains; disulfide-linked. The disulfide link is formed within the large subunit homodimers. Mg(2+) serves as cofactor. In terms of processing, the disulfide bond which can form in the large chain dimeric partners within the hexadecamer appears to be associated with oxidative stress and protein turnover.

The protein resides in the plastid. The protein localises to the chloroplast. The catalysed reaction is 2 (2R)-3-phosphoglycerate + 2 H(+) = D-ribulose 1,5-bisphosphate + CO2 + H2O. The enzyme catalyses D-ribulose 1,5-bisphosphate + O2 = 2-phosphoglycolate + (2R)-3-phosphoglycerate + 2 H(+). RuBisCO catalyzes two reactions: the carboxylation of D-ribulose 1,5-bisphosphate, the primary event in carbon dioxide fixation, as well as the oxidative fragmentation of the pentose substrate in the photorespiration process. Both reactions occur simultaneously and in competition at the same active site. The sequence is that of Ribulose bisphosphate carboxylase large chain from Bartlettina sordida (Purple torch).